Consider the following 305-residue polypeptide: MDFIKKYLYVCDHPGFFELTQETFQNRWFPAQINLSVDVKCLSLMSEADVNFYKYLFTFLGMAETLVNFNIDELLVDFECHDIKHYYCEQMAMECVHGKVYFNILNMLFKNNLAATWEFAEAVLKDEALQKKLEWLESKIKMAKTKAEKVLIFYLIEGVFFISSFYCIGLLRVKGVMPGVCMANDYISRDELLHTRAAALLYNTMIPKEERPSSEWVVSLFKEAVEIECAFIEAKTKQVTFVSMDDIRAFLEATADRLLNSIELPRYYKSDPPQSCPLTYTGCIKNVSFFERESTEYSSFIINDL.

Fe cation contacts are provided by Glu-64, Glu-94, and His-97. Tyr-101 is a catalytic residue. A helical transmembrane segment spans residues 150–170; sequence VLIFYLIEGVFFISSFYCIGL. Fe cation contacts are provided by Glu-157, Glu-191, and His-194.

The protein belongs to the ribonucleoside diphosphate reductase small chain family. Heterotetramer composed of a homodimer of the large subunit (R1) and a homodimer of the small subunit (R2). Larger multisubunit protein complex are also active, composed of (R1)n(R2)n. Fe cation is required as a cofactor.

The protein localises to the host membrane. The enzyme catalyses a 2'-deoxyribonucleoside 5'-diphosphate + [thioredoxin]-disulfide + H2O = a ribonucleoside 5'-diphosphate + [thioredoxin]-dithiol. Its function is as follows. Ribonucleoside-diphosphate reductase holoenzyme provides the precursors necessary for viral DNA synthesis. Allows virus growth in non-dividing cells, as well as reactivation from latency in infected hosts. Catalyzes the biosynthesis of deoxyribonucleotides from the corresponding ribonucleotides. The polypeptide is Ribonucleoside-diphosphate reductase small subunit (Alcelaphine herpesvirus 1 (strain C500) (AlHV-1)).